The sequence spans 306 residues: tRNA dimethylallyltransferase 1 (306 aa).

An ATP-binding site is contributed by 15–22 (GPTGSGKS). 17–22 (TGSGKS) is a binding site for substrate. An interaction with substrate tRNA region spans residues 40–43 (DSMQ).

This sequence belongs to the IPP transferase family. As to quaternary structure, monomer. Mg(2+) is required as a cofactor.

It carries out the reaction adenosine(37) in tRNA + dimethylallyl diphosphate = N(6)-dimethylallyladenosine(37) in tRNA + diphosphate. Catalyzes the transfer of a dimethylallyl group onto the adenine at position 37 in tRNAs that read codons beginning with uridine, leading to the formation of N6-(dimethylallyl)adenosine (i(6)A). The polypeptide is tRNA dimethylallyltransferase 1 (Citrifermentans bemidjiense (strain ATCC BAA-1014 / DSM 16622 / JCM 12645 / Bem) (Geobacter bemidjiensis)).